We begin with the raw amino-acid sequence, 211 residues long: HTH-type transcriptional repressor FabR (211 aa).

Positions 10 to 70 constitute an HTH tetR-type domain; the sequence is RTRRSLVEAA…TMVDESGLML (61 aa). A DNA-binding region (H-T-H motif) is located at residues 33-52; sequence SLREVAREAGIAPTSFYRHF.

In terms of assembly, homodimer.

It localises to the cytoplasm. Represses the transcription of fabB, involved in unsaturated fatty acid (UFA) biosynthesis. By controlling UFA production, FabR directly influences the physical properties of the membrane bilayer. This chain is HTH-type transcriptional repressor FabR, found in Cronobacter sakazakii (strain ATCC BAA-894) (Enterobacter sakazakii).